A 375-amino-acid chain; its full sequence is DNA replication and repair protein RecF (375 aa).

30–37 (GDNAQGKT) contributes to the ATP binding site.

Belongs to the RecF family.

It localises to the cytoplasm. In terms of biological role, the RecF protein is involved in DNA metabolism; it is required for DNA replication and normal SOS inducibility. RecF binds preferentially to single-stranded, linear DNA. It also seems to bind ATP. This chain is DNA replication and repair protein RecF, found in Symbiobacterium thermophilum (strain DSM 24528 / JCM 14929 / IAM 14863 / T).